An 83-amino-acid chain; its full sequence is Protein YciN (83 aa).

This is Protein YciN (yciN) from Escherichia coli O157:H7.